The primary structure comprises 839 residues: MTRLDVEKTIEELTLGEKVALTAGIDFWHTASVPRLNIPTLRMSDGPNGVRGTRFFNGVPAACFPCATALGATWDTELLHECGRLMGEESIAKGSHIILGPTINTQRSPLGGRGFESFAEDGVLSGNLAGYMSKGIQEKGVAATLKHFVCNDQEHERLAVDSIVTMRAMREIYLMPFQLAMRICPTACVMTAYNKVNGTHVSENKQIITDILRKEWGWDGLVMSDWFGTYSTSEAINAGLDLEMPGKTRWRSTPLAHAVSSNKVAEFVMDERVRNVLNLVNFVEPLGIPENCPEKALNRPQDQALLRRAAAESIVLMKNDDNILPLKKDKPILVIGPNAKIAAYCGGGSASLDPYYTVTPFEGVSAKSTGAVTFSQGVYSHKQLPELGPLMKSADGKKGFSFRVYKEPVSAPSRELVDELHLVSSSGFLMDYVHPKIDSLTFYVDMEGYFTPEEDGVYDFGVTVVGTGKLLIDGETVVDNTKNQRPGSAFFGTATVEEQGSKELKAGQTYKVVLEFGTAPTSDLDTRGVVVFGPGGFRFGASRRVSQEELIAKAADAAAQAEQVVIFAGLTSEWETEGHDRDHMDLPPGSDEMIQRVLAANPNTAVVIQSGTPVTMPWAAQTKALVQAWFGGNECGNGIADVLYGDVNPAGKLPLSFPVRLQDNPSYLNFRSERGRVLYGEDVYVGYRYYEKVNLAPLFPFGHGLSYTTFERSDLTLATVPEKPQYETAGEPITASVTVTNTGPVAGAEVVQLWVRPPPTGVNRPVRELKGFAKVMLNPGEQKRVDIVVEKKLATSWWDEQREMWASEKGQYEVQVTGTGADVLTSSFAVEKTRFWLGL.

Asparagine 197 carries N-linked (GlcNAc...) asparagine glycosylation. Residue aspartate 225 is part of the active site. Residues 395–555 (DGKKGFSFRV…SQEELIAKAA (161 aa)) enclose the PA14 domain.

This sequence belongs to the glycosyl hydrolase 3 family.

Its subcellular location is the secreted. The catalysed reaction is Hydrolysis of terminal, non-reducing beta-D-glucosyl residues with release of beta-D-glucose.. Its pathway is glycan metabolism; cellulose degradation. Beta-glucosidases are one of a number of cellulolytic enzymes involved in the degradation of cellulosic biomass. Catalyzes the last step releasing glucose from the inhibitory cellobiose. The polypeptide is Probable beta-glucosidase I (bglI) (Aspergillus terreus (strain NIH 2624 / FGSC A1156)).